Consider the following 106-residue polypeptide: MIISTTHSIEGRQITAYLDIVSAESVQGVNVIRDMFAGMRDFFGGRSQTLERALKEARVQATDEIKERARALQADAVVGVDFEISMPAGKGGMVVVFATGTAVKLR.

It belongs to the UPF0145 family.

In Pseudomonas fluorescens (strain Pf0-1), this protein is UPF0145 protein Pfl01_1745.